The sequence spans 261 residues: Thiazole synthase (261 aa).

Catalysis depends on Lys-95, which acts as the Schiff-base intermediate with DXP. 1-deoxy-D-xylulose 5-phosphate contacts are provided by residues Gly-156, 182 to 183 (AG), and 204 to 205 (NT).

This sequence belongs to the ThiG family. Homotetramer. Forms heterodimers with either ThiH or ThiS.

It localises to the cytoplasm. It catalyses the reaction [ThiS sulfur-carrier protein]-C-terminal-Gly-aminoethanethioate + 2-iminoacetate + 1-deoxy-D-xylulose 5-phosphate = [ThiS sulfur-carrier protein]-C-terminal Gly-Gly + 2-[(2R,5Z)-2-carboxy-4-methylthiazol-5(2H)-ylidene]ethyl phosphate + 2 H2O + H(+). It participates in cofactor biosynthesis; thiamine diphosphate biosynthesis. In terms of biological role, catalyzes the rearrangement of 1-deoxy-D-xylulose 5-phosphate (DXP) to produce the thiazole phosphate moiety of thiamine. Sulfur is provided by the thiocarboxylate moiety of the carrier protein ThiS. In vitro, sulfur can be provided by H(2)S. This Pectobacterium atrosepticum (strain SCRI 1043 / ATCC BAA-672) (Erwinia carotovora subsp. atroseptica) protein is Thiazole synthase.